The following is a 119-amino-acid chain: Large ribosomal subunit protein uL18 (119 aa).

A disordered region spans residues 1–20; the sequence is MSQIDKASRRQKIKDRSRVK. Residues 9-20 show a composition bias toward basic residues; it reads RRQKIKDRSRVK.

It belongs to the universal ribosomal protein uL18 family. In terms of assembly, part of the 50S ribosomal subunit; part of the 5S rRNA/L5/L18/L25 subcomplex. Contacts the 5S and 23S rRNAs.

Functionally, this is one of the proteins that bind and probably mediate the attachment of the 5S RNA into the large ribosomal subunit, where it forms part of the central protuberance. The sequence is that of Large ribosomal subunit protein uL18 from Chlorobium phaeobacteroides (strain DSM 266 / SMG 266 / 2430).